Here is a 228-residue protein sequence, read N- to C-terminus: Ribulose-phosphate 3-epimerase (228 aa).

Position 9 (Ser9) interacts with substrate. A divalent metal cation contacts are provided by His34, Asp36, His68, and Asp177. Residue Asp36 is the Proton acceptor of the active site. Substrate contacts are provided by residues His68, 177-179 (DGG), and 199-200 (GS). The Proton donor role is filled by Asp177.

This sequence belongs to the ribulose-phosphate 3-epimerase family. A divalent metal cation serves as cofactor.

It catalyses the reaction D-ribulose 5-phosphate = D-xylulose 5-phosphate. The protein operates within carbohydrate degradation. Catalyzes the reversible epimerization of D-ribulose 5-phosphate to D-xylulose 5-phosphate. This is Ribulose-phosphate 3-epimerase from Buchnera aphidicola subsp. Acyrthosiphon pisum (strain APS) (Acyrthosiphon pisum symbiotic bacterium).